The following is a 318-amino-acid chain: CRISPR-associated protein Cas7/Csa2 1 (318 aa).

It belongs to the CRISPR-associated protein Cas7/Cst2/DevR family. Subtype I-a/Apern subfamily. In terms of assembly, part of the aCascade ribonucleoprotein complex, minimally composed of Csa2 and Cas5a, which binds crRNA. Other possible components of aCascade in strain P1 are Cas6b (SSO1437) and Csa5 (SSO1443), while SSO1399, Cas5b (SSO1400) and SSO1401 have sometimes been seen weakly associated. Csa2 is probably the major RNA-binding subunit. The Csa2-Cas5a-crRNA complex also binds target DNA homologous to crRNA, probably forming an R-loop. Purified aCascade forms a filament about 6 nm in width.

CRISPR (clustered regularly interspaced short palindromic repeat) is an adaptive immune system that provides protection against mobile genetic elements (viruses, transposable elements and conjugative plasmids). CRISPR clusters contain spacers, sequences complementary to antecedent mobile elements, and target invading nucleic acids. CRISPR clusters are transcribed and processed into CRISPR RNA (crRNA). In Saccharolobus solfataricus (strain ATCC 35092 / DSM 1617 / JCM 11322 / P2) (Sulfolobus solfataricus), this protein is CRISPR-associated protein Cas7/Csa2 1 (cas7a).